A 331-amino-acid polypeptide reads, in one-letter code: Anthranilate phosphoribosyltransferase (331 aa).

Residues Gly-78, 81-82 (GD), Thr-86, 88-91 (NVST), 106-114 (KHGNYSVSS), and Ser-118 contribute to the 5-phospho-alpha-D-ribose 1-diphosphate site. An anthranilate-binding site is contributed by Gly-78. Mg(2+) is bound at residue Ser-90. Asn-109 lines the anthranilate pocket. Residue Arg-164 coordinates anthranilate. Positions 222 and 223 each coordinate Mg(2+).

The protein belongs to the anthranilate phosphoribosyltransferase family. As to quaternary structure, homodimer. Requires Mg(2+) as cofactor.

It carries out the reaction N-(5-phospho-beta-D-ribosyl)anthranilate + diphosphate = 5-phospho-alpha-D-ribose 1-diphosphate + anthranilate. It participates in amino-acid biosynthesis; L-tryptophan biosynthesis; L-tryptophan from chorismate: step 2/5. Catalyzes the transfer of the phosphoribosyl group of 5-phosphorylribose-1-pyrophosphate (PRPP) to anthranilate to yield N-(5'-phosphoribosyl)-anthranilate (PRA). The sequence is that of Anthranilate phosphoribosyltransferase from Haloarcula marismortui (strain ATCC 43049 / DSM 3752 / JCM 8966 / VKM B-1809) (Halobacterium marismortui).